The sequence spans 103 residues: Large ribosomal subunit protein uL24 (103 aa).

It belongs to the universal ribosomal protein uL24 family. In terms of assembly, part of the 50S ribosomal subunit.

One of two assembly initiator proteins, it binds directly to the 5'-end of the 23S rRNA, where it nucleates assembly of the 50S subunit. Its function is as follows. One of the proteins that surrounds the polypeptide exit tunnel on the outside of the subunit. This is Large ribosomal subunit protein uL24 from Sinorhizobium medicae (strain WSM419) (Ensifer medicae).